A 989-amino-acid chain; its full sequence is ATP-dependent 6-phosphofructokinase subunit alpha (989 aa).

Positions Met1–Lys585 are N-terminal catalytic PFK domain 1. ATP is bound by residues Gly220, Arg283–Cys284, and Gly313–Ser316. Asp314 is a Mg(2+) binding site. Residues Ser359–Asp361, Arg396, Met403–Arg405, Glu460, Arg487, and His493–Arg496 each bind beta-D-fructose 6-phosphate. Asp361 serves as the catalytic Proton acceptor. Residues Tyr586–Leu599 are interdomain linker. The interval Asn600–Thr989 is C-terminal regulatory PFK domain 2. Beta-D-fructose 2,6-bisphosphate-binding positions include Arg670, Thr727–Asn731, Arg765, Gln772–Gly774, Glu832, Arg858, His864–Gln867, and Arg963.

The protein belongs to the phosphofructokinase type A (PFKA) family. ATP-dependent PFK group I subfamily. Eukaryotic two domain clade 'E' sub-subfamily. In terms of assembly, heterododecamer of 4 alpha, 4 beta and 4 gamma chains. Mg(2+) is required as a cofactor.

It is found in the cytoplasm. The enzyme catalyses beta-D-fructose 6-phosphate + ATP = beta-D-fructose 1,6-bisphosphate + ADP + H(+). It participates in carbohydrate degradation; glycolysis; D-glyceraldehyde 3-phosphate and glycerone phosphate from D-glucose: step 3/4. Its activity is regulated as follows. Allosterically activated by ADP, AMP, or fructose 2,6-bisphosphate, and allosterically inhibited by ATP or citrate. Functionally, catalyzes the phosphorylation of D-fructose 6-phosphate to fructose 1,6-bisphosphate by ATP, the first committing step of glycolysis. This is ATP-dependent 6-phosphofructokinase subunit alpha (PFK1) from Komagataella pastoris (Yeast).